Here is a 240-residue protein sequence, read N- to C-terminus: 1-(5-phosphoribosyl)-5-[(5-phosphoribosylamino)methylideneamino] imidazole-4-carboxamide isomerase (240 aa).

The active-site Proton acceptor is Asp-9. The Proton donor role is filled by Asp-131.

The protein belongs to the HisA/HisF family.

It localises to the cytoplasm. The enzyme catalyses 1-(5-phospho-beta-D-ribosyl)-5-[(5-phospho-beta-D-ribosylamino)methylideneamino]imidazole-4-carboxamide = 5-[(5-phospho-1-deoxy-D-ribulos-1-ylimino)methylamino]-1-(5-phospho-beta-D-ribosyl)imidazole-4-carboxamide. It participates in amino-acid biosynthesis; L-histidine biosynthesis; L-histidine from 5-phospho-alpha-D-ribose 1-diphosphate: step 4/9. This Cytophaga hutchinsonii (strain ATCC 33406 / DSM 1761 / CIP 103989 / NBRC 15051 / NCIMB 9469 / D465) protein is 1-(5-phosphoribosyl)-5-[(5-phosphoribosylamino)methylideneamino] imidazole-4-carboxamide isomerase.